Reading from the N-terminus, the 78-residue chain is Acyl carrier protein (78 aa).

A Carrier domain is found at 2-77 (SDIAERVKKI…DAVKFIEKAQ (76 aa)). Serine 37 bears the O-(pantetheine 4'-phosphoryl)serine mark.

The protein belongs to the acyl carrier protein (ACP) family. 4'-phosphopantetheine is transferred from CoA to a specific serine of apo-ACP by AcpS. This modification is essential for activity because fatty acids are bound in thioester linkage to the sulfhydryl of the prosthetic group.

The protein resides in the cytoplasm. Its pathway is lipid metabolism; fatty acid biosynthesis. Its function is as follows. Carrier of the growing fatty acid chain in fatty acid biosynthesis. In Rhizobium etli (strain CIAT 652), this protein is Acyl carrier protein.